The following is a 286-amino-acid chain: uncharacterized protein (286 aa).

It belongs to the NmrA-type oxidoreductase family.

This is an uncharacterized protein from Bacillus subtilis (strain 168).